The sequence spans 311 residues: Malate dehydrogenase (311 aa).

10–15 serves as a coordination point for NAD(+); the sequence is GAGHTG. Residues Arg85 and Arg91 each coordinate substrate. NAD(+) is bound by residues Asn98 and 121-123; that span reads LTN. The substrate site is built by Asn123 and Arg154. His178 functions as the Proton acceptor in the catalytic mechanism.

The protein belongs to the LDH/MDH superfamily. MDH type 3 family.

It catalyses the reaction (S)-malate + NAD(+) = oxaloacetate + NADH + H(+). Functionally, catalyzes the reversible oxidation of malate to oxaloacetate. The polypeptide is Malate dehydrogenase (Staphylococcus carnosus (strain TM300)).